The primary structure comprises 325 residues: Transaldolase (325 aa).

The Schiff-base intermediate with substrate role is filled by Lys-125.

Belongs to the transaldolase family. Type 2 subfamily.

It localises to the cytoplasm. It carries out the reaction D-sedoheptulose 7-phosphate + D-glyceraldehyde 3-phosphate = D-erythrose 4-phosphate + beta-D-fructose 6-phosphate. It participates in carbohydrate degradation; pentose phosphate pathway; D-glyceraldehyde 3-phosphate and beta-D-fructose 6-phosphate from D-ribose 5-phosphate and D-xylulose 5-phosphate (non-oxidative stage): step 2/3. Functionally, transaldolase is important for the balance of metabolites in the pentose-phosphate pathway. This chain is Transaldolase, found in Campylobacter jejuni subsp. jejuni serotype O:6 (strain 81116 / NCTC 11828).